The following is a 721-amino-acid chain: BBSome complex member bbs-7 (721 aa).

In terms of assembly, part of BBSome complex, that contains at least bbs-1, bbs-2, bbs-4, bbs-5, osm-12, bbs-8/ttc-8 and bbs-9. Interacts with bbs-1. In terms of tissue distribution, expressed in ciliated cells including amphid and both inner and outer labial neurons of the head and in both phasmid neurons PHA and PHB in the tail at larval stages L1 and L2.

The protein resides in the cell projection. It is found in the cilium. Its subcellular location is the cytoplasm. The protein localises to the cytoskeleton. It localises to the cilium basal body. The protein resides in the cilium axoneme. In terms of biological role, component of the BBSome complex. The BBSome complex is thought to function as a coat complex required for sorting of specific membrane proteins to the primary cilia. The BBSome complex is required for ciliogenesis but is dispensable for centriolar satellite function. Required for proper BBSome complex assembly and its ciliary localization. Required for cilia biogenesis and both the assembly and movement of intraflagellar transport proteins along the ciliary axoneme. Plays a role in the removal of degraded mechanosensory receptors within the cilia. Plays a role in guanylyl cyclase localization in the ring-like structures at the base of the finger compartment in AFD sensory neurons. In ciliated sensory neurons, required for the sensation of nitric oxide and avoidance of NO-producing organisms like P.aeruginosa. This chain is BBSome complex member bbs-7, found in Caenorhabditis elegans.